The following is a 495-amino-acid chain: MRGDSFIWSLATAIPLLSTAVESLQVVKRDNPSVLGFDIERFQVAKPIHRDIIAKRASTKTISQDLDNQKNLYFCNLTLGTPPQTIRAHIDTGSSDLWVNTAESRFCSSRRAPCSQGGTYDSSSSSTYQLVNNDFNISYVDGSGATGDYVTDVINVGGIKLKDFQFAIGHTSSSPLGVLGIGYEAGEAQVTRSGDQSYPNLPAALVKAGHIRSNAYSLWLNDLSASRGQILFGGIDTGKFQGKLQTVPVLHTSRGDYTSLVVALTGVGIRTGSDGSIDTFPSQPVAVAMDSGSSLSYLPDALAAKVYNSVDAVFDPANNLAFVPCSMANDKRKLVFTFSSPQIAVGMDELVIDLGPDANGNEATFRDGSKACVFGIAPAGSSISILGDTVLRSAYLVYDLDNNEISIAPTRFNSTETNILEIGTGENSVPDATGVPNAVTSAQVTQATGLPGVETGVPGSRPPSSKAAGQAKRPDFVLGVAAVGLAGAGMLFAAM.

An N-terminal signal peptide occupies residues M1 to T19. In terms of domain architecture, Peptidase A1 spans Y73–A408. The N-linked (GlcNAc...) asparagine glycan is linked to N76. The active site involves D91. N136 is a glycosylation site (N-linked (GlcNAc...) asparagine). D290 is a catalytic residue. N413 carries an N-linked (GlcNAc...) asparagine glycan. The tract at residues A447–Q470 is disordered. A467 carries the GPI-anchor amidated alanine lipid modification. A propeptide spans A468 to M495 (removed in mature form).

This sequence belongs to the peptidase A1 family.

Its subcellular location is the cell membrane. Functionally, probable GPI-anchored aspartic-type endopeptidase which contributes to virulence. This chain is Probable aspartic-type endopeptidase OPSB (OPSB), found in Arthroderma benhamiae (strain ATCC MYA-4681 / CBS 112371) (Trichophyton mentagrophytes).